The following is a 910-amino-acid chain: DNA repair and recombination protein RAD54B (910 aa).

A compositionally biased stretch (polar residues) spans 1–14 (MRRSAAPSQLQGNS). The segment at 1-33 (MRRSAAPSQLQGNSFKKPKFIPPGRSNPGLNEE) is disordered. Ser-14 carries the phosphoserine modification. The region spanning 313-480 (GMRMNGRCGA…FALIDFVNPG (168 aa)) is the Helicase ATP-binding domain. 326–333 (DEMGLGKT) contacts ATP. The DEGH box motif lies at 431–434 (DEGH). One can recognise a Helicase C-terminal domain in the interval 649-810 (KLLAVIHELR…HIQFSVEELK (162 aa)).

This sequence belongs to the SNF2/RAD54 helicase family. Interacts with RAD51 through the NH2-terminal domain. Immunoprecipitation experiments show that the interaction is constitutive and not induced by ionizing radiation. The interaction may be indirect. In terms of tissue distribution, abundantly expressed in testis and spleen. Relatively low levels observed in thymus, prostate, ovary and colon.

The protein resides in the nucleus. Functionally, involved in DNA repair and mitotic recombination. May play an active role in recombination processes in concert with other members of the RAD52 epistasis group. In Homo sapiens (Human), this protein is DNA repair and recombination protein RAD54B (RAD54B).